The sequence spans 287 residues: Oxaloacetate decarboxylase (287 aa).

S50 serves as a coordination point for substrate. Position 88 (D88) interacts with Mg(2+). Substrate-binding residues include R159 and H235.

This sequence belongs to the isocitrate lyase family. Oxaloacetate decarboxylase subfamily. As to quaternary structure, homotetramer; dimer of dimers. Mg(2+) serves as cofactor.

The enzyme catalyses oxaloacetate + H(+) = pyruvate + CO2. In terms of biological role, catalyzes the decarboxylation of oxaloacetate into pyruvate. Seems to play a role in maintaining cellular concentrations of bicarbonate and pyruvate. In Pseudomonas aeruginosa (strain LESB58), this protein is Oxaloacetate decarboxylase.